An 81-amino-acid polypeptide reads, in one-letter code: MRLFLSLLVVVLSIVLEGPTPAQGVPDVSNSFDVLEGFGKTLEDNVREFINLITQSELPAKTRDWFSETFRKVKEKLKINS.

The N-terminal stretch at 1 to 24 (MRLFLSLLVVVLSIVLEGPTPAQG) is a signal peptide.

It belongs to the apolipoprotein C1 family.

It localises to the secreted. The polypeptide is Apolipoprotein C-I, acidic form (APOC1A) (Theropithecus gelada (Gelada baboon)).